A 161-amino-acid polypeptide reads, in one-letter code: Probable cell wall elongation regulator TseB (161 aa).

Topologically, residues 1–5 (MRKKA) are cytoplasmic. Residues 6-26 (LIFTVIFGIIFLAVLLVSASI) form a helical membrane-spanning segment. Residues 27-161 (YKSAMAQKEE…TGKILKNITP (135 aa)) lie on the Extracellular side of the membrane.

Interacts with the penicillin-binding protein PBP2A, a monofunctional transpeptidase.

It is found in the cell membrane. Functionally, required for normal cell shape. Plays an important role in cell wall elongation during exponential phase and spore outgrowth. Probably regulates the activity of the penicillin-binding protein PBP2A through a direct interaction. Not required for PBP2A activity, stability and localization. The chain is Probable cell wall elongation regulator TseB from Bacillus subtilis (strain 168).